A 376-amino-acid chain; its full sequence is Fibromodulin (376 aa).

Residues 1 to 18 form the signal peptide; that stretch reads MQWASVLLLAGLCSLSQG. Gln-19 bears the Pyrrolidone carboxylic acid mark. 6 positions are modified to sulfotyrosine: Tyr-20, Tyr-38, Tyr-53, Tyr-55, Tyr-63, and Tyr-65. Residues 67-105 form the LRRNT domain; the sequence is APPPPEPRDCPQECDCPPNFPTAMYCDNRNLKYLPFVPS. LRR repeat units follow at residues 106–127, 130–151, 156–176, 177–198, 201–222, 224–245, 246–266, and 269–289; these read RMKYVYFQNNQISAIQEGVFDN, GLLWVALHGNQITSDKVGRKVF, HLERLYLDHNNLTRMPGPLPR, SLRELHLDHNQISRVPNNALEG, NLTALYLHHNEIQEVGSSMRGL, SLILLDLSYNHLRRVPDGLPSA, LEQLYLEHNNVYTVPDSYFRG, and KLLYVRLSHNSLTNNGLATNT. Asn-127 carries N-linked (GlcNAc...) (keratan sulfate) asparagine glycosylation. Residue Asn-166 is glycosylated (N-linked (GlcNAc...) (keratan sulfate) asparagine). N-linked (GlcNAc...) (keratan sulfate) asparagine glycosylation is present at Asn-201. N-linked (GlcNAc...) (keratan sulfate) asparagine glycosylation is present at Asn-291. 2 LRR repeats span residues 294–315 and 316–335; these read SLLELDLSYNQLQKIPPVNTNL and ENLYLQGNRINEFSISSFCT. A disulfide bridge connects residues Cys-334 and Cys-367. Asn-341 carries N-linked (GlcNAc...) asparagine glycosylation. Residues 344 to 367 form an LRR 11 repeat; the sequence is KLQVLRLDGNEIKRSAMPVDAPLC.

Belongs to the small leucine-rich proteoglycan (SLRP) family. SLRP class II subfamily. Binds to type I and type II collagen. In terms of processing, binds keratan sulfate chains. Post-translationally, sulfated on tyrosine residue(s). In terms of tissue distribution, highest levels observed in knee epiphysis, in calvarial and diaphyseal bone, in nasal and costal cartilage, in the eye, and in bladder. In mature knee joint it is mostly present in the proliferating zone of growth plate. It is also observed in ligaments, especially at insertion sites, in the junction between meniscus and joint capsule, in the perimysium of skeletal muscle and in the periosteum.

It localises to the secreted. The protein localises to the extracellular space. It is found in the extracellular matrix. In terms of biological role, affects the rate of fibrils formation. May have a primary role in collagen fibrillogenesis. In Mus musculus (Mouse), this protein is Fibromodulin (Fmod).